A 512-amino-acid chain; its full sequence is Altronate oxidoreductase (512 aa).

26–37 (VLQFGEGNFLRG) provides a ligand contact to NAD(+).

The protein belongs to the mannitol dehydrogenase family. UxaB subfamily.

The catalysed reaction is D-altronate + NAD(+) = keto-D-tagaturonate + NADH + H(+). The protein operates within carbohydrate metabolism; pentose and glucuronate interconversion. This chain is Altronate oxidoreductase, found in Halalkalibacterium halodurans (strain ATCC BAA-125 / DSM 18197 / FERM 7344 / JCM 9153 / C-125) (Bacillus halodurans).